The following is a 911-amino-acid chain: Ribonuclease J (911 aa).

The transit peptide at 1-70 directs the protein to the chloroplast; it reads MMKPASLQGF…VTSAPASGTS (70 aa). Positions 58-90 are disordered; sequence SCSVTSAPASGTSSSSKTPRRRSGRLEGVGKSM. The span at 63-74 shows a compositional bias: low complexity; the sequence is SAPASGTSSSSK. Zn(2+) is bound by residues His175, His177, Asp179, His180, His245, and Asp267. Substrate is bound by residues 336 to 338 and 468 to 472; these read ASN and HTSGH. His494 is a binding site for Zn(2+). Disordered stretches follow at residues 695–723 and 735–824; these read VEGNDKRSRAKKAPSQEASPKEVDRTLED and EETA…WKPE. Basic and acidic residues-rich tracts occupy residues 713-722 and 783-795; these read SPKEVDRTLE and ADTEPKAEGKENS. The span at 796-806 shows a compositional bias: acidic residues; that stretch reads RDDDELADASD. The region spanning 813-877 is the Myb-like domain; the sequence is PKRVRKNKWK…QCKSLWASLI (65 aa).

This sequence belongs to the metallo-beta-lactamase superfamily. RNA-metabolizing metallo-beta-lactamase-like family. Bacterial RNase J subfamily. Homodimer. May be a subunit of the RNA degradosome. Zn(2+) serves as cofactor. As to expression, moslty expressed in inflorescences, seedlings, leaves, flowers and flower buds, and, to a lower extent, in stems, siliques and roots.

The protein resides in the plastid. Its subcellular location is the chloroplast. Essential protein required during embryogenesis, especially in initiating and maintaining the organization of shoot apical meristems (SAMs), cotyledons, and hypocotyls. Involved in auxin-mediated pathways during embryogenesis. RNase that has both endonuclease and 5'-3' exonuclease activities. Involved in RNA surveillance to prevent overaccumulation of antisense RNA. Probably involved in maturation of rRNA and in some organisms also mRNA maturation and/or decay. This is Ribonuclease J from Arabidopsis thaliana (Mouse-ear cress).